The chain runs to 349 residues: uncharacterized protein (349 aa).

The span at 116-135 (HFSQTNPKSTPEPPCTSSSG) shows a compositional bias: polar residues. The segment at 116 to 148 (HFSQTNPKSTPEPPCTSSSGAGDCHENLPADGY) is disordered.

This is an uncharacterized protein from Caenorhabditis elegans.